The sequence spans 60 residues: Large ribosomal subunit protein uL30 (60 aa).

This sequence belongs to the universal ribosomal protein uL30 family. As to quaternary structure, part of the 50S ribosomal subunit.

In Lactiplantibacillus plantarum (strain ATCC BAA-793 / NCIMB 8826 / WCFS1) (Lactobacillus plantarum), this protein is Large ribosomal subunit protein uL30.